Here is a 439-residue protein sequence, read N- to C-terminus: Histidine--tRNA ligase (439 aa).

The protein belongs to the class-II aminoacyl-tRNA synthetase family. Homodimer.

The protein localises to the cytoplasm. It carries out the reaction tRNA(His) + L-histidine + ATP = L-histidyl-tRNA(His) + AMP + diphosphate + H(+). This is Histidine--tRNA ligase (hisS) from Leptospira interrogans serogroup Icterohaemorrhagiae serovar Lai (strain 56601).